The primary structure comprises 488 residues: Ribulose bisphosphate carboxylase large chain (488 aa).

Positions 127 and 177 each coordinate substrate. The Proton acceptor role is filled by lysine 179. Substrate is bound at residue lysine 181. Lysine 205, aspartate 207, and glutamate 208 together coordinate Mg(2+). Lysine 205 carries the N6-carboxylysine modification. The Proton acceptor role is filled by histidine 297. Residues arginine 298, histidine 330, and serine 382 each coordinate substrate.

Belongs to the RuBisCO large chain family. Type I subfamily. In terms of assembly, heterohexadecamer of 8 large chains and 8 small chains. The cofactor is Mg(2+).

It localises to the plastid. The protein localises to the chloroplast. The catalysed reaction is 2 (2R)-3-phosphoglycerate + 2 H(+) = D-ribulose 1,5-bisphosphate + CO2 + H2O. It catalyses the reaction D-ribulose 1,5-bisphosphate + O2 = 2-phosphoglycolate + (2R)-3-phosphoglycerate + 2 H(+). Its function is as follows. RuBisCO catalyzes two reactions: the carboxylation of D-ribulose 1,5-bisphosphate, the primary event in carbon dioxide fixation, as well as the oxidative fragmentation of the pentose substrate in the photorespiration process. Both reactions occur simultaneously and in competition at the same active site. The protein is Ribulose bisphosphate carboxylase large chain of Cyanidioschyzon merolae (strain NIES-3377 / 10D) (Unicellular red alga).